The sequence spans 426 residues: 3-isopropylmalate dehydratase large subunit (426 aa).

Residues Cys307, Cys367, and Cys370 each contribute to the [4Fe-4S] cluster site.

It belongs to the aconitase/IPM isomerase family. LeuC type 2 subfamily. In terms of assembly, heterodimer of LeuC and LeuD. Requires [4Fe-4S] cluster as cofactor.

It carries out the reaction (2R,3S)-3-isopropylmalate = (2S)-2-isopropylmalate. The protein operates within amino-acid biosynthesis; L-leucine biosynthesis; L-leucine from 3-methyl-2-oxobutanoate: step 2/4. Catalyzes the isomerization between 2-isopropylmalate and 3-isopropylmalate, via the formation of 2-isopropylmaleate. The sequence is that of 3-isopropylmalate dehydratase large subunit from Aliarcobacter butzleri (strain RM4018) (Arcobacter butzleri).